Here is a 578-residue protein sequence, read N- to C-terminus: Dystrotelin (578 aa).

The segment at 223 to 279 (THPARCTLCRTFPITGLRYRCLKCLNFDICQMCFLSGLHSKSHQKSHPVIEHCIQMS) adopts a ZZ-type zinc-finger fold. The Zn(2+) site is built by C228, C231, C243, C246, C252, C255, H265, and H269. Residues 322–351 (HHAQARLLKKQLNQYKDKLQAIYTSQEERI) adopt a coiled-coil conformation. Positions 382–475 (RLQPPGPSSS…QSQTQKMPQK (94 aa)) are disordered. Composition is skewed to basic and acidic residues over residues 399–410 (KVDHSSTEKVPK) and 431–451 (PKLD…HALR). Polar residues predominate over residues 455 to 472 (SPETTLHSTRAQSQTQKM). Positions 503–537 (ALAAVEKKEAGNIKERKDELEEEELQELLSKLMDA) form a coiled coil.

It localises to the cell membrane. In Homo sapiens (Human), this protein is Dystrotelin (DYTN).